The following is a 572-amino-acid chain: Mitochondrial distribution and morphology protein 34 (572 aa).

An SMP-LTD domain is found at 1-195 (MAFNFNWSPL…LPAIIHRLSL (195 aa)). 4 disordered regions span residues 212–236 (TASA…VDAL), 355–426 (GAGR…PDND), 487–507 (HGAS…GSSR), and 552–572 (ACGP…AYGH). Residues 358 to 370 (RHSKAHARKRKKR) are compositionally biased toward basic residues. Basic and acidic residues predominate over residues 371–381 (VVDLRRPKTTD). Positions 387 to 400 (SDESSFTESTSAPS) are enriched in polar residues.

Belongs to the MDM34 family. Component of the ER-mitochondria encounter structure (ERMES) or MDM complex, composed of mmm1, mdm10, mdm12 and mdm34.

Its subcellular location is the mitochondrion outer membrane. Functionally, component of the ERMES/MDM complex, which serves as a molecular tether to connect the endoplasmic reticulum (ER) and mitochondria. Components of this complex are involved in the control of mitochondrial shape and protein biogenesis, and function in nonvesicular lipid trafficking between the ER and mitochondria. Mdm34 is required for the interaction of the ER-resident membrane protein mmm1 and the outer mitochondrial membrane-resident beta-barrel protein mdm10. The polypeptide is Mitochondrial distribution and morphology protein 34 (Aspergillus fumigatus (strain ATCC MYA-4609 / CBS 101355 / FGSC A1100 / Af293) (Neosartorya fumigata)).